A 434-amino-acid polypeptide reads, in one-letter code: F-box/FBD/LRR-repeat protein At3g26920 (434 aa).

The F-box domain occupies 16–65 (EDRISQLPEALLLQILSLLPTKEVVAVSVLAKRWRFLWKMVPSLEFFYYF). LRR repeat units follow at residues 69 to 95 (LERF…HLNM), 100 to 125 (DPRI…VLKV), 145 to 172 (TLEL…NLHE), 173 to 198 (VEFV…VIHQ), 219 to 244 (VIVE…KIEG), 265 to 290 (IIDV…SLKV), and 315 to 341 (TYKP…KIFD). Residues 353-403 (KWNEPKNVPECLLLHLETFVWTCYEGKLENEIELAKYILRNARRLKKATFS) form the FBD domain.

The chain is F-box/FBD/LRR-repeat protein At3g26920 from Arabidopsis thaliana (Mouse-ear cress).